A 478-amino-acid polypeptide reads, in one-letter code: Glutamate--tRNA ligase (478 aa).

The short motif at 9–19 is the 'HIGH' region element; that stretch reads PSPTGLLHIGT. A 'KMSKS' region motif is present at residues 248-252; it reads KLSKR. K251 lines the ATP pocket.

This sequence belongs to the class-I aminoacyl-tRNA synthetase family. Glutamate--tRNA ligase type 1 subfamily. In terms of assembly, monomer.

The protein resides in the cytoplasm. The catalysed reaction is tRNA(Glu) + L-glutamate + ATP = L-glutamyl-tRNA(Glu) + AMP + diphosphate. In terms of biological role, catalyzes the attachment of glutamate to tRNA(Glu) in a two-step reaction: glutamate is first activated by ATP to form Glu-AMP and then transferred to the acceptor end of tRNA(Glu). In Prochlorococcus marinus (strain MIT 9515), this protein is Glutamate--tRNA ligase.